The following is a 101-amino-acid chain: Large ribosomal subunit protein bL28 (101 aa).

The protein belongs to the bacterial ribosomal protein bL28 family.

This is Large ribosomal subunit protein bL28 from Rhodopseudomonas palustris (strain BisB5).